The sequence spans 289 residues: ATP synthase subunit a (289 aa).

6 helical membrane-spanning segments follow: residues 43–63 (AFHL…LLIF), 104–124 (IAPL…VDLI), 160–180 (FCVF…GGFI), 193–213 (IFVQ…TLIA), 232–252 (VFIL…GLGV), and 259–279 (AVFH…LTIV).

Belongs to the ATPase A chain family. As to quaternary structure, F-type ATPases have 2 components, CF(1) - the catalytic core - and CF(0) - the membrane proton channel. CF(1) has five subunits: alpha(3), beta(3), gamma(1), delta(1), epsilon(1). CF(0) has three main subunits: a(1), b(2) and c(9-12). The alpha and beta chains form an alternating ring which encloses part of the gamma chain. CF(1) is attached to CF(0) by a central stalk formed by the gamma and epsilon chains, while a peripheral stalk is formed by the delta and b chains.

Its subcellular location is the cell inner membrane. Functionally, key component of the proton channel; it plays a direct role in the translocation of protons across the membrane. This Pseudomonas putida (strain ATCC 47054 / DSM 6125 / CFBP 8728 / NCIMB 11950 / KT2440) protein is ATP synthase subunit a.